An 81-amino-acid polypeptide reads, in one-letter code: MAFVSGFTGMPVTARVSKAVCRTRMALEGGKSSGGGEATRDPEPTAVDPNDPKGKQQAIHVAPSFADYLKAQADKKKAEGK.

A chloroplast-targeting transit peptide spans 1-25 (MAFVSGFTGMPVTARVSKAVCRTRM). The tract at residues 27–57 (LEGGKSSGGGEATRDPEPTAVDPNDPKGKQQ) is disordered.

Its subcellular location is the plastid. It localises to the chloroplast. The protein is Protein PYP1 of Pyropia yezoensis (Susabi-nori).